The chain runs to 436 residues: Ribosome biogenesis protein WDR12 homolog (436 aa).

Positions 13–97 (VRVRFLTKLP…ERVLELEYVK (85 aa)) are ubiquitin-like (UBL) domain. WD repeat units lie at residues 109–147 (PHDD…THIL), 149–193 (GHSD…SVPK), 203–242 (GHTS…EDGD), 273–311 (GHTQ…ETWN), 313–353 (VSGK…TLAP), 359–399 (SHKS…PLAS), and 402–436 (SHKD…IEIV). The disordered stretch occupies residues 240-262 (DGDTVSVKKRRTNSDSSGPEESL).

This sequence belongs to the WD repeat WDR12/YTM1 family.

The protein localises to the nucleus. It is found in the nucleolus. It localises to the nucleoplasm. Functionally, required for maturation of ribosomal RNAs and formation of the large ribosomal subunit. The polypeptide is Ribosome biogenesis protein WDR12 homolog (Oryza sativa subsp. japonica (Rice)).